We begin with the raw amino-acid sequence, 435 residues long: Xylose isomerase (435 aa).

2 residues coordinate Mg(2+): Asp306 and Asp308.

It belongs to the xylose isomerase family. Homotetramer. Mg(2+) is required as a cofactor.

The protein localises to the cytoplasm. It carries out the reaction alpha-D-xylose = alpha-D-xylulofuranose. The chain is Xylose isomerase from Brucella melitensis biotype 2 (strain ATCC 23457).